Here is a 127-residue protein sequence, read N- to C-terminus: Aspartate 1-decarboxylase (127 aa).

The active-site Schiff-base intermediate with substrate; via pyruvic acid is Ser25. Position 25 is a pyruvic acid (Ser) (Ser25). Substrate is bound at residue Thr57. Tyr58 serves as the catalytic Proton donor. Substrate is bound at residue 73–75 (GAA).

Belongs to the PanD family. In terms of assembly, heterooctamer of four alpha and four beta subunits. Pyruvate is required as a cofactor. In terms of processing, is synthesized initially as an inactive proenzyme, which is activated by self-cleavage at a specific serine bond to produce a beta-subunit with a hydroxyl group at its C-terminus and an alpha-subunit with a pyruvoyl group at its N-terminus.

The protein localises to the cytoplasm. It catalyses the reaction L-aspartate + H(+) = beta-alanine + CO2. It participates in cofactor biosynthesis; (R)-pantothenate biosynthesis; beta-alanine from L-aspartate: step 1/1. Its function is as follows. Catalyzes the pyruvoyl-dependent decarboxylation of aspartate to produce beta-alanine. This is Aspartate 1-decarboxylase from Clostridium acetobutylicum (strain ATCC 824 / DSM 792 / JCM 1419 / IAM 19013 / LMG 5710 / NBRC 13948 / NRRL B-527 / VKM B-1787 / 2291 / W).